Reading from the N-terminus, the 337-residue chain is Phosphoenolpyruvate transferase (337 aa).

Aspartate 69 lines the 7,8-didemethyl-8-hydroxy-5-deazariboflavin pocket.

Belongs to the CofD family. Homodimer. Mg(2+) serves as cofactor.

The enzyme catalyses enolpyruvoyl-2-diphospho-5'-guanosine + 7,8-didemethyl-8-hydroxy-5-deazariboflavin = dehydro coenzyme F420-0 + GMP + H(+). The protein operates within cofactor biosynthesis; coenzyme F420 biosynthesis. Catalyzes the transfer of the phosphoenolpyruvate moiety from enoylpyruvoyl-2-diphospho-5'-guanosine (EPPG) to 7,8-didemethyl-8-hydroxy-5-deazariboflavin (FO) with the formation of dehydro coenzyme F420-0 and GMP. In Mycobacterium avium (strain 104), this protein is Phosphoenolpyruvate transferase.